A 310-amino-acid polypeptide reads, in one-letter code: Olfactory receptor 4C11 (310 aa).

At M1–K23 the chain is on the extracellular side. Residue N4 is glycosylated (N-linked (GlcNAc...) asparagine). A helical transmembrane segment spans residues I24 to I47. The Cytoplasmic portion of the chain corresponds to K48–S55. The helical transmembrane segment at P56–P77 threads the bilayer. Residues R78–Q98 are Extracellular-facing. A disulfide bond links C95 and C187. Residues V99–V118 form a helical membrane-spanning segment. Over D119 to Q137 the chain is Cytoplasmic. The chain crosses the membrane as a helical span at residues V138–A156. At Q157–I193 the chain is on the extracellular side. Residues N194–I217 traverse the membrane as a helical segment. Residues V218 to K233 are Cytoplasmic-facing. The helical transmembrane segment at A234 to Y256 threads the bilayer. Residues T257 to K267 are Extracellular-facing. A helical transmembrane segment spans residues M268–L287. The Cytoplasmic segment spans residues R288 to G310.

This sequence belongs to the G-protein coupled receptor 1 family.

Its subcellular location is the cell membrane. Odorant receptor. The sequence is that of Olfactory receptor 4C11 (OR4C11) from Homo sapiens (Human).